The primary structure comprises 139 residues: Nucleoside diphosphate kinase (139 aa).

K11, F59, R87, T93, R104, and N114 together coordinate ATP. Catalysis depends on H117, which acts as the Pros-phosphohistidine intermediate.

It belongs to the NDK family. In terms of assembly, homotetramer. Mg(2+) is required as a cofactor.

The protein resides in the cytoplasm. It carries out the reaction a 2'-deoxyribonucleoside 5'-diphosphate + ATP = a 2'-deoxyribonucleoside 5'-triphosphate + ADP. The enzyme catalyses a ribonucleoside 5'-diphosphate + ATP = a ribonucleoside 5'-triphosphate + ADP. Its function is as follows. Major role in the synthesis of nucleoside triphosphates other than ATP. The ATP gamma phosphate is transferred to the NDP beta phosphate via a ping-pong mechanism, using a phosphorylated active-site intermediate. The protein is Nucleoside diphosphate kinase of Coxiella burnetii (strain CbuK_Q154) (Coxiella burnetii (strain Q154)).